The primary structure comprises 238 residues: LexA repressor (238 aa).

Positions 26–46 form a DNA-binding region, H-T-H motif; the sequence is FDEMKDALDLASKSGIHRLIT. Residues Ser158 and Lys196 each act as for autocatalytic cleavage activity in the active site.

Belongs to the peptidase S24 family. As to quaternary structure, homodimer.

The catalysed reaction is Hydrolysis of Ala-|-Gly bond in repressor LexA.. Functionally, represses a number of genes involved in the response to DNA damage (SOS response), including recA and lexA. In the presence of single-stranded DNA, RecA interacts with LexA causing an autocatalytic cleavage which disrupts the DNA-binding part of LexA, leading to derepression of the SOS regulon and eventually DNA repair. The chain is LexA repressor from Sinorhizobium medicae (strain WSM419) (Ensifer medicae).